A 239-amino-acid chain; its full sequence is Aspartate/glutamate leucyltransferase (239 aa).

The protein belongs to the R-transferase family. Bpt subfamily.

It localises to the cytoplasm. The catalysed reaction is N-terminal L-glutamyl-[protein] + L-leucyl-tRNA(Leu) = N-terminal L-leucyl-L-glutamyl-[protein] + tRNA(Leu) + H(+). It carries out the reaction N-terminal L-aspartyl-[protein] + L-leucyl-tRNA(Leu) = N-terminal L-leucyl-L-aspartyl-[protein] + tRNA(Leu) + H(+). In terms of biological role, functions in the N-end rule pathway of protein degradation where it conjugates Leu from its aminoacyl-tRNA to the N-termini of proteins containing an N-terminal aspartate or glutamate. The sequence is that of Aspartate/glutamate leucyltransferase from Campylobacter jejuni subsp. jejuni serotype O:2 (strain ATCC 700819 / NCTC 11168).